We begin with the raw amino-acid sequence, 287 residues long: Protein UL24 homolog (287 aa).

2 disordered regions span residues 1 to 33 (MARR…FSRR) and 254 to 287 (RVGK…DSNL). Positions 16-33 (HRSRTRSKTAHHRKFSRR) are enriched in basic residues.

This sequence belongs to the herpesviridae UL24 family.

The protein resides in the virion. The protein localises to the host cytoplasm. It localises to the host nucleus. Its subcellular location is the host nucleolus. It is found in the host Golgi apparatus. May participate in nuclear egress of viral particles. Plays a role in the dispersal of several host nucleolar proteins including NCL/nucleolin and NPM1. Since deletion of host NCL/nucleolin negatively impact on nuclear egress, UL24 supposedly acts on this process through its effect on host nucleoli. This Infectious laryngotracheitis virus (strain Thorne V882) (ILTV) protein is Protein UL24 homolog.